We begin with the raw amino-acid sequence, 199 residues long: Secreted chorismate mutase (199 aa).

The signal sequence occupies residues 1-33 (MLTRPREIYLATAVSIGILLSLIAPLGPPLARA). The region spanning 34-113 (DGTSQLAELV…ATEAIEYSRF (80 aa)) is the Chorismate mutase domain. Substrate contacts are provided by residues Arg49, Lys60, Asp69, 72 to 76 (RVEQQ), 105 to 109 (TEAIE), and Arg134. An intrachain disulfide couples Cys160 to Cys193.

As to quaternary structure, homodimer.

It is found in the secreted. It carries out the reaction chorismate = prephenate. The protein operates within metabolic intermediate biosynthesis; prephenate biosynthesis; prephenate from chorismate: step 1/1. Tyrosine, phenylalanine, and tryptophan moderately enhance chorismate mutase activity at low concentrations, but allosterically inhibit the enzyme at higher concentrations. In terms of biological role, catalyzes the Claisen rearrangement of chorismate to prephenate. May play some role in the pathogenicity. This Mycobacterium tuberculosis (strain ATCC 25618 / H37Rv) protein is Secreted chorismate mutase.